We begin with the raw amino-acid sequence, 253 residues long: Chemokine-binding protein (253 aa).

The first 17 residues, 1–17, serve as a signal peptide directing secretion; that stretch reads MKQYIVLACMCLAAAAM. Residues 62–87 are disordered; that stretch reads TEITESESDPEVESEDDSTSVEDVDP. A compositionally biased stretch (acidic residues) spans 65–86; sequence TESESDPEVESEDDSTSVEDVD.

Belongs to the orthopoxvirus OPG001 family. Binds to host CC chemokines, such as RANTES/CCL5, MIP-1alpha/CCL3, MCP-1/CCL2 and eotaxin.

The protein localises to the secreted. Inhibits host immune defense by binding to host chemokines. Binds host CC chemokines (beta chemokines) such as RANTES with high affinity, but not CXC or C chemokines (alpha and gamma chemokines). This Variola virus (isolate Human/India/Ind3/1967) (VARV) protein is Chemokine-binding protein (OPG001).